A 256-amino-acid polypeptide reads, in one-letter code: MLWQKPTAPEQAPAPPRPYQGVRVKEPVKELLRRKRGHASSGASVTPTAVVLPHQPLATYTTVGPSCLDMEVSASTVTEEGALCAGWLSQPAPAALQPLAPWTPYTEYVSHEAVSCPYSADMYVQPVCPSYTVVGPSSVLTYASQPLITNVTTRSAAAPTVGPPLEGPEHQAPLTYFPWPQPLSTLPTSTLQYQPPAPALPGPQFVQLPISIPEPVLPDAEDPRRAIGSLTIDKLLLEEEDSDTYALNHTLSVEGF.

The tract at residues 1–23 is disordered; the sequence is MLWQKPTAPEQAPAPPRPYQGVR. The OCA domain maps to 16–38; it reads PRPYQGVRVKEPVKELLRRKRGH.

Belongs to the POU2AF family. As to quaternary structure, interacts with POU2F1/OCT1 and POU2F2/OCT2; the interaction increases POU2F1 and POU2F2 transactivation activity. Post-translationally, ubiquitinated; mediated by SIAH1 or SIAH2 and leading to its subsequent proteasomal degradation.

It is found in the nucleus. Functionally, transcriptional coactivator that specifically associates with either POU2F1/OCT1 or POU2F2/OCT2. It boosts the POU2F1/OCT1 mediated promoter activity and to a lesser extent, that of POU2F2/OCT2. It recognizes the POU domains of POU2F1/OCT1 and POU2F2/OCT2. It is essential for the response of B-cells to antigens and required for the formation of germinal centers. Regulates IL6 expression in B cells as POU2F2/OCT2 coactivator. This is POU domain class 2-associating factor 1 (POU2AF1) from Bos taurus (Bovine).